The following is a 396-amino-acid chain: S-adenosylmethionine synthase 3 (396 aa).

Residue E12 coordinates Mg(2+). H18 lines the ATP pocket. E46 provides a ligand contact to K(+). L-methionine is bound by residues E59 and Q102. Residues 170–172 (DGK), 238–241 (SGRF), D249, 255–256 (RK), A272, K276, and K280 each bind ATP. D249 is an L-methionine binding site. K280 is an L-methionine binding site.

Belongs to the AdoMet synthase family. In terms of assembly, homotetramer. Mn(2+) is required as a cofactor. The cofactor is Mg(2+). Co(2+) serves as cofactor. It depends on K(+) as a cofactor.

It is found in the cytoplasm. It catalyses the reaction L-methionine + ATP + H2O = S-adenosyl-L-methionine + phosphate + diphosphate. It participates in amino-acid biosynthesis; S-adenosyl-L-methionine biosynthesis; S-adenosyl-L-methionine from L-methionine: step 1/1. Its function is as follows. Catalyzes the formation of S-adenosylmethionine from methionine and ATP. The reaction comprises two steps that are both catalyzed by the same enzyme: formation of S-adenosylmethionine (AdoMet) and triphosphate, and subsequent hydrolysis of the triphosphate. The chain is S-adenosylmethionine synthase 3 (METK3) from Oryza sativa subsp. japonica (Rice).